The primary structure comprises 564 residues: Probable pectinesterase/pectinesterase inhibitor 46 (564 aa).

Residues 25 to 45 form a helical membrane-spanning segment; sequence IAIIAISSIVLVCIVVGAVVG. The pectinesterase inhibitor 46 stretch occupies residues 62–207; the sequence is EPISVSVKAL…TEMTSNALAI (146 aa). Residues Asn90, Asn126, Asn147, and Asn196 are each glycosylated (N-linked (GlcNAc...) asparagine). Residues 257–550 form a pectinesterase 46 region; that stretch reads TIVVAKDGSG…FTVKPFIDGN (294 aa). Residues Thr332 and Gln362 each contribute to the substrate site. The Proton donor; for pectinesterase activity role is filled by Asp385. A disulfide bridge connects residues Cys399 and Cys419. Catalysis depends on Asp406, which acts as the Nucleophile; for pectinesterase activity. N-linked (GlcNAc...) asparagine glycans are attached at residues Asn452 and Asn460. Arg470 and Trp472 together coordinate substrate.

The protein in the N-terminal section; belongs to the PMEI family. This sequence in the C-terminal section; belongs to the pectinesterase family.

The protein localises to the membrane. It catalyses the reaction [(1-&gt;4)-alpha-D-galacturonosyl methyl ester](n) + n H2O = [(1-&gt;4)-alpha-D-galacturonosyl](n) + n methanol + n H(+). It functions in the pathway glycan metabolism; pectin degradation; 2-dehydro-3-deoxy-D-gluconate from pectin: step 1/5. In terms of biological role, acts in the modification of cell walls via demethylesterification of cell wall pectin. The sequence is that of Probable pectinesterase/pectinesterase inhibitor 46 (PME46) from Arabidopsis thaliana (Mouse-ear cress).